A 196-amino-acid chain; its full sequence is Molybdenum cofactor guanylyltransferase (196 aa).

Residues 10 to 12, lysine 23, asparagine 51, aspartate 69, and aspartate 99 contribute to the GTP site; that span reads LAG. Mg(2+) is bound at residue aspartate 99.

It belongs to the MobA family. As to quaternary structure, monomer. It depends on Mg(2+) as a cofactor.

The protein resides in the cytoplasm. It catalyses the reaction Mo-molybdopterin + GTP + H(+) = Mo-molybdopterin guanine dinucleotide + diphosphate. In terms of biological role, transfers a GMP moiety from GTP to Mo-molybdopterin (Mo-MPT) cofactor (Moco or molybdenum cofactor) to form Mo-molybdopterin guanine dinucleotide (Mo-MGD) cofactor. The sequence is that of Molybdenum cofactor guanylyltransferase from Shewanella sediminis (strain HAW-EB3).